The sequence spans 1060 residues: Protocadherin-1 (1060 aa).

A signal peptide spans 1–57 (MDSGAGGRRCPEAALLILGPPRMEHLRHSPGPGGQRLLLPSMLLALLLLLAPSPGHA). Cadherin domains follow at residues 58–168 (TRVV…TPNF), 169–280 (ASPV…APKF), 281–387 (ERPS…APTI), 396–506 (THQD…APVF), 507–612 (TQSV…DPKF), 613–715 (MLSG…APYI), and 718–844 (PSNT…DPEY). Topologically, residues 58 to 852 (TRVVYKVPEE…EYERSKQRGN (795 aa)) are extracellular. Residues N305 and N403 are each glycosylated (N-linked (GlcNAc...) asparagine). N-linked (GlcNAc...) asparagine glycosylation is found at N618, N662, N813, and N818. A helical membrane pass occupies residues 853–873 (ILFGVVAGVVAVALLIALAVL). At 874 to 1060 (VRYCRQREAK…HGAIWTEVWE (187 aa)) the chain is on the cytoplasmic side. The segment covering 884–897 (SGYQAGKKETKDLY) has biased composition (basic and acidic residues). The segment at 884-1045 (SGYQAGKKET…QPFQLSTPQP (162 aa)) is disordered. Over residues 907–920 (KGNKSKGKKSKSPK) the composition is skewed to basic residues. S918, S949, S962, and S984 each carry phosphoserine. Low complexity predominate over residues 973 to 986 (SPLPSIQLQPQSPS). Composition is skewed to polar residues over residues 1003–1024 (FVGT…SYRT) and 1033–1043 (QVGQPFQLSTP).

In terms of tissue distribution, highly expressed in the brain and neuro-glial cells.

Its subcellular location is the cell junction. The protein resides in the cell membrane. May be involved in cell-cell interaction processes and in cell adhesion. The sequence is that of Protocadherin-1 (PCDH1) from Homo sapiens (Human).